The chain runs to 308 residues: Putative gluconeogenesis factor (308 aa).

Belongs to the gluconeogenesis factor family.

The protein resides in the cytoplasm. Its function is as follows. Required for morphogenesis under gluconeogenic growth conditions. The sequence is that of Putative gluconeogenesis factor from Pasteurella multocida (strain Pm70).